The sequence spans 353 residues: Nicotinate-nucleotide--dimethylbenzimidazole phosphoribosyltransferase (353 aa).

Glu-318 functions as the Proton acceptor in the catalytic mechanism.

This sequence belongs to the CobT family.

The catalysed reaction is 5,6-dimethylbenzimidazole + nicotinate beta-D-ribonucleotide = alpha-ribazole 5'-phosphate + nicotinate + H(+). It participates in nucleoside biosynthesis; alpha-ribazole biosynthesis; alpha-ribazole from 5,6-dimethylbenzimidazole: step 1/2. In terms of biological role, catalyzes the synthesis of alpha-ribazole-5'-phosphate from nicotinate mononucleotide (NAMN) and 5,6-dimethylbenzimidazole (DMB). The sequence is that of Nicotinate-nucleotide--dimethylbenzimidazole phosphoribosyltransferase from Roseiflexus sp. (strain RS-1).